Reading from the N-terminus, the 160-residue chain is Nucleotide-binding protein VSAL_I1728 (160 aa).

It belongs to the YajQ family.

Its function is as follows. Nucleotide-binding protein. This Aliivibrio salmonicida (strain LFI1238) (Vibrio salmonicida (strain LFI1238)) protein is Nucleotide-binding protein VSAL_I1728.